The following is an 828-amino-acid chain: Neurotrophin receptor-interacting factor 1 (828 aa).

One can recognise a KRAB 1 domain in the interval 14-85; that stretch reads VKFEDVSLTF…QREIPQDTLP (72 aa). A Glycyl lysine isopeptide (Lys-Gly) (interchain with G-Cter in ubiquitin) cross-link involves residue Lys-15. The 83-residue stretch at 158–240 folds into the SCAN box domain; sequence RQKFRHFQYE…ALLENMTSVS (83 aa). One can recognise a KRAB 2 domain in the interval 280-370; sequence VTFQDVAVDF…ESILEDGVKE (91 aa). 3 disordered regions span residues 328-355, 377-490, and 575-611; these read RELT…RNGT, NQVG…DPIT, and QKGY…LSTS. Polar residues predominate over residues 345-355; that stretch reads PNTNDLSRNGT. Residues 384-394 are compositionally biased toward basic and acidic residues; sequence EKGHPQKKFSE. Over residues 418 to 433 the composition is skewed to basic residues; the sequence is KYVKVKQKGTGKRKGR. The segment covering 458 to 478 has biased composition (polar residues); sequence RSGSTPVTHGSSIKKQQQGSE. Positions 589–599 are enriched in basic residues; that stretch reads SWKHIKPHQKG. Positions 600–611 are enriched in basic and acidic residues; that stretch reads SKGERVEELSTS. 5 consecutive C2H2-type zinc fingers follow at residues 684–706, 712–734, 740–762, 768–790, and 796–818; these read CRCS…KKIH, YMCM…LRIH, FECS…LRTH, YHCE…ERTH, and YVCI…QKTH.

The protein belongs to the krueppel C2H2-type zinc-finger protein family. In terms of assembly, interacts with NGFR/p75(NTR). Interacts (via KRAB 1 domain) with TRAF6. Interacts (when ubiquitinated at Lys-15) with SQSTM1/p62. Post-translationally, ubiquitinated by TRAF6 at Lys-15 through 'Lys-63'-linked polyubiquitination. 'Lys-63'-linked polyubiquitination occurs in response to NGFR/p75(NTR) cleavage by gamma-secretase and promotes binding with the ICD cleavage product of NGFR/p75(NTR), followed by translocation into the nucleus and subsequent apoptosis. Ubiquitously expressed at low level. Expressed at higher level in testis.

It is found in the cytoplasm. The protein resides in the nucleus. Transcription regulator involved in NGFR/p75(NTR)-mediated apoptosis. Essential component of the NGFR/p75(NTR) apoptotic pathway: upon ligand-binding and subsequent cleavage of NGFR/p75(NTR), binds to the intracellular domain (ICD) cleavage product of NGFR/p75(NTR), translocates to the nucleus and induces apoptosis, possibly by regulating expression of key regulators of apoptosis. Induces NGFR/p75(NTR)-mediated apoptosis in retina and sympathetic neurons. May also regulate expression of neuronal cholesterol biosynthesis genes. Probably acts as a transcription repressor: specifically binds to the 3'-end of zinc-finger coding genes and recruiting chromatin-modifying proteins such as SETDB1 and TRIM28/KAP1, leading to transcription repression. The polypeptide is Neurotrophin receptor-interacting factor 1 (Nrif1) (Mus musculus (Mouse)).